The following is a 136-amino-acid chain: Protein NrdI (136 aa).

The protein belongs to the NrdI family.

Functionally, probably involved in ribonucleotide reductase function. This is Protein NrdI from Escherichia coli O7:K1 (strain IAI39 / ExPEC).